Here is a 75-residue protein sequence, read N- to C-terminus: MPQISRYSNEQVEQLLAELLNVLEKHKAPTDLSLMVLGNMVTNLINTSIAPAQRQAIANSFASALQSSINEDKAH.

The protein belongs to the UPF0352 family.

The sequence is that of UPF0352 protein YejL from Shigella flexneri.